The following is a 740-amino-acid chain: Ethylene receptor 1 (740 aa).

The next 3 membrane-spanning stretches (helical) occupy residues 23-43 (ISDF…IYFV), 53-73 (WVLV…LINL), and 92-112 (VLTA…IPDL). Cys65 and His69 together coordinate Cu cation. The GAF domain maps to 158–307 (DRHTILKTTL…VVADQVAVAL (150 aa)). The Histidine kinase domain occupies 350-588 (VMNHEMRTPM…TFIVKLGIAE (239 aa)). Residue His353 is modified to Phosphohistidine; by autocatalysis. The Response regulatory domain occupies 614–731 (KVLVMDDNGV…KMRSVLSELI (118 aa)). The residue at position 662 (Asp662) is a 4-aspartylphosphate.

The protein belongs to the ethylene receptor family. Homodimer; disulfide-linked. Requires Cu cation as cofactor. Activation probably requires a transfer of a phosphate group between a His in the transmitter domain and an Asp of the receiver domain.

The protein localises to the endoplasmic reticulum membrane. It catalyses the reaction ATP + protein L-histidine = ADP + protein N-phospho-L-histidine.. Functionally, may act early in the ethylene signal transduction pathway, possibly as an ethylene receptor, or as a regulator of the pathway. This chain is Ethylene receptor 1 (ETR1), found in Cucumis sativus (Cucumber).